Here is a 110-residue protein sequence, read N- to C-terminus: PHD finger-like domain-containing protein 5A (110 aa).

At Ala-2 the chain carries N-acetylalanine. Lys-3 carries the N6-acetyllysine modification. Zn(2+)-binding residues include Cys-11, Cys-23, Cys-26, Cys-30, Cys-33, Cys-46, Cys-49, Cys-58, Cys-61, Cys-72, and Cys-75. The segment at 35-51 is interaction with SF3B1 and SF3B3; it reads SYVRPCTLVRICDECNY. Residues 79–82 form an interaction with SF3B3 region; it reads EKDR. Residue Cys-85 coordinates Zn(2+). Residue Ser-94 is modified to Phosphoserine.

This sequence belongs to the PHF5 family. In terms of assembly, component of the 17S U2 SnRNP complex, a ribonucleoprotein complex that contains small nuclear RNA (snRNA) U2 and a number of specific proteins. Part of the SF3B subcomplex of the 17S U2 SnRNP complex. SF3B associates with the splicing subcomplex SF3A and a 12S RNA unit to form the U2 small nuclear ribonucleoproteins complex (U2 snRNP). Within the SF3B complex interacts directly with SF3B1 and SF3B3. Component of the minor spliceosome, which splices U12-type introns. Within this complex, interacts with CRIPT. Interacts (via N-terminus) with U2AF1 and SRSF5; acts to bridge the two. Interacts (via C-terminus) with EP400 and DDX1; acts to bridge the two. Interacts with the PAF1 complex (PAF1C) composed of CDC73, PAF1, LEO1, CTR9, RTF1 and SKIC8. Within the PAF1C interacts directly with CDC73 and SKIC8. Interacts with RNA polymerase II. Expressed in primary spermatocytes (at protein level). Ubiquitously expressed in pre- and postnatal tissues. Highly expressed in pluripotent embryonic stem cells (ESCs) (at protein level) and induced pluripotent stem cells (iPSCs).

It localises to the nucleus. The protein localises to the nucleus speckle. Its function is as follows. Component of the 17S U2 SnRNP complex of the spliceosome, a large ribonucleoprotein complex that removes introns from transcribed pre-mRNAs. The 17S U2 SnRNP complex (1) directly participates in early spliceosome assembly and (2) mediates recognition of the intron branch site during pre-mRNA splicing by promoting the selection of the pre-mRNA branch-site adenosine, the nucleophile for the first step of splicing. Within the 17S U2 SnRNP complex, PHF5A is part of the SF3B subcomplex, which is required for 'A' complex assembly formed by the stable binding of U2 snRNP to the branchpoint sequence in pre-mRNA. Sequence independent binding of SF3A and SF3B subcomplexes upstream of the branch site is essential, it may anchor U2 snRNP to the pre-mRNA. Also acts as a component of the minor spliceosome, which is involved in the splicing of U12-type introns in pre-mRNAs. Also involved in elongation by RNA polymerase II as part of the PAF1 complex (PAF1C). PAF1C is required for maintenance of embryonic stem cell (ESC) self-renewal and cellular reprogramming of stem cells. Maintains pluripotency by recruiting and stabilizing PAF1C on pluripotency genes loci, and by regulating the expression of the pluripotency genes. Regulates the deposition of elongation-associated histone modifications, including dimethylated histone H3 'Lys-79' (H3K79me2) and trimethylated histone H3 'Lys-36' (H3K36me3), on PAF1C targets, self-renewal and pluripotency genes. Regulates RNA polymerase II promoter-proximal pause release of the PAF1C targets and self-renewal genes, and the levels of elongating ('Ser-2' phosphorylated) RNA polymerase II in their gene bodies. Regulates muscle specification in adult stem cells by stabilizing PAF1C in chromatin to promote myogenic differentiation. Acts as a transcriptional regulator by binding to the GJA1/Cx43 promoter and enhancing its up-regulation by ESR1/ER-alpha. This is PHD finger-like domain-containing protein 5A (Phf5a) from Mus musculus (Mouse).